We begin with the raw amino-acid sequence, 473 residues long: Adenosylhomocysteinase (473 aa).

Substrate-binding positions include 58–62, Asp135, and Glu197; that span reads HMTIQ. 198-200 is an NAD(+) binding site; that stretch reads TTT. Positions 227 and 231 each coordinate substrate. Residues Asn232, Val265, Glu284, Asn319, 340 to 342, and Asn385 contribute to the NAD(+) site; that span reads IGH. His342 lines the substrate pocket. Position 392 (His392) interacts with substrate. Lys467 and Tyr471 together coordinate NAD(+).

The protein belongs to the adenosylhomocysteinase family. As to quaternary structure, homotetramer; dimer of dimers. NAD(+) serves as cofactor.

It localises to the cytoplasm. The enzyme catalyses S-adenosyl-L-homocysteine + H2O = L-homocysteine + adenosine. Its pathway is amino-acid biosynthesis; L-homocysteine biosynthesis; L-homocysteine from S-adenosyl-L-homocysteine: step 1/1. Functionally, may play a key role in the regulation of the intracellular concentration of adenosylhomocysteine, which is a strong inhibitor of SAM-dependent methyltransferases. Catalyzes the hydrolysis of S-adenosyl-L-homocysteine into L-homocysteine and adenosine. The sequence is that of Adenosylhomocysteinase from Bradyrhizobium elkanii.